The sequence spans 418 residues: Phospho-N-acetylmuramoyl-pentapeptide-transferase (418 aa).

The next 10 helical transmembrane spans lie at 22–42 (YISFRSVLSFSLSLIISVLIG), 72–92 (TPTMGGIIIIIAILIPVLLLA), 95–115 (SNIYVLLMLITTIWLGILGLI), 135–155 (IIAQVGLGLIVGLIVYLSPNI), 208–228 (AATWILFVLITVFIVTAVSNG), 244–264 (AIIGVVLGILAYVSANLGFAA), 277–297 (LTVFASAFVGACMGFLWHNAF), 302–322 (FMGDIGSLTLGGIIAVFAIII), 326–346 (LLLPMLCGIFFTESLSVMIQV), and 395–415 (KIVVRFWLIGILLAALTVVTL).

This sequence belongs to the glycosyltransferase 4 family. MraY subfamily. Mg(2+) is required as a cofactor.

The protein resides in the cell inner membrane. The catalysed reaction is UDP-N-acetyl-alpha-D-muramoyl-L-alanyl-gamma-D-glutamyl-meso-2,6-diaminopimeloyl-D-alanyl-D-alanine + di-trans,octa-cis-undecaprenyl phosphate = di-trans,octa-cis-undecaprenyl diphospho-N-acetyl-alpha-D-muramoyl-L-alanyl-D-glutamyl-meso-2,6-diaminopimeloyl-D-alanyl-D-alanine + UMP. Its pathway is cell wall biogenesis; peptidoglycan biosynthesis. Its function is as follows. Catalyzes the initial step of the lipid cycle reactions in the biosynthesis of the cell wall peptidoglycan: transfers peptidoglycan precursor phospho-MurNAc-pentapeptide from UDP-MurNAc-pentapeptide onto the lipid carrier undecaprenyl phosphate, yielding undecaprenyl-pyrophosphoryl-MurNAc-pentapeptide, known as lipid I. In Azobacteroides pseudotrichonymphae genomovar. CFP2, this protein is Phospho-N-acetylmuramoyl-pentapeptide-transferase.